The following is a 551-amino-acid chain: Prunin 1 Pru du 6.0101 (551 aa).

Residues 1 to 20 (MAKAFVFSLCLLLVFNGCLA) form the signal peptide. 2 cysteine pairs are disulfide-bonded: C32–C65 and C108–C374. A Cupin type-1 1 domain is found at 37–312 (LQAREPDNRI…ALNVNEETAR (276 aa)). Disordered regions lie at residues 111–194 (TFEE…QKTR), 238–293 (NPRK…NVFS), and 311–361 (ARNL…QQQG). Composition is skewed to low complexity over residues 114–124 (ESQQSSQQGRQ), 132–148 (QQQQQGEQGRQQGQQEQ), and 168–185 (QEQQQGQQGRPQQQQQFR). IgE-binding regions lie at residues 118 to 132 (SSQQGRQQEQEQERQ), 145 to 159 (QQEQQQERQGRQQGR), 161 to 175 (QQEEGRQQEQQQGQQ), and 225 to 239 (LFHVSSDHNQLDQNP). Over residues 254-275 (QQGQSQPRQQGEQGRPGQHQQP) the composition is skewed to low complexity. The tract at residues 281-295 (QQEQQGSGNNVFSGF) is igE-binding. Composition is skewed to polar residues over residues 282–293 (QEQQGSGNNVFS) and 311–323 (ARNLQGQNDNRNQ). A compositionally biased stretch (basic and acidic residues) spans 339–350 (GRQEREHEERQQ). Low complexity predominate over residues 351–361 (EQLQQERQQQG). Residues 367 to 372 (NGLEET) carry the NGXEET; peptidase recognition motif motif. Positions 380–529 (ENIGNPERAD…AYQISREQAR (150 aa)) constitute a Cupin type-1 2 domain. The interval 510-524 (RALPDEVLANAYQIS) is igE-binding.

This sequence belongs to the 11S seed storage protein (globulins) family. As to quaternary structure, hexamer of two trimers; each subunit is composed of an acidic and a basic chain derived from a single precursor and linked by a disulfide bond. In terms of processing, proteolytically processed from a single precursor to produce an acidic and a basic chain that are linked by a disulfide bond. In terms of tissue distribution, expressed in seed (at protein level).

In terms of biological role, seed storage protein. This is Prunin 1 Pru du 6.0101 from Prunus dulcis (Almond).